The chain runs to 224 residues: MSVFGKLFGAGGGKAGKGGPTPQEAIQRLRDTEEMLSKKQEFLEKKIEQELTAAKKHGTKNKRAALQALKRKKRYEKQLAQIDGTLSTIEFQREALENANTNTEVLKNMGYAAKAMKAAHDNMDIDKVDELMQDIADQQELAEEISTAISKPVGFGEEFDEDELMAELEELEQEELDKNLLEISGPETVPLPNVPSVALPSKPAKKKEEEDDDMKELENWAGSM.

Positions 1-23 (MSVFGKLFGAGGGKAGKGGPTPQ) are disordered. Position 2 is an N-acetylserine (Ser-2). The segment at 2-153 (SVFGKLFGAG…EISTAISKPV (152 aa)) is intramolecular interaction with C-terminus. Lys-6 carries the N6-acetyllysine modification. A compositionally biased stretch (gly residues) spans 8–19 (FGAGGGKAGKGG). A coiled-coil region spans residues 23 to 183 (QEAIQRLRDT…EELDKNLLEI (161 aa)). The residue at position 114 (Lys-114) is an N6-acetyllysine. Residues 154–224 (GFGEEFDEDE…KELENWAGSM (71 aa)) form an intramolecular interaction with N-terminus region. Ser-184 and Ser-223 each carry phosphoserine. A disordered region spans residues 185 to 224 (GPETVPLPNVPSVALPSKPAKKKEEEDDDMKELENWAGSM).

It belongs to the SNF7 family. Probable core component of the endosomal sorting required for transport complex III (ESCRT-III). ESCRT-III components are thought to multimerize to form a flat lattice on the perimeter membrane of the endosome. Several assembly forms of ESCRT-III may exist that interact and act sequentially. Interacts with CHMP6 and CHMP4C. Interacts with PDCD6IP; the interaction is direct. Interacts with VPS4A; the interaction is direct. Interacts with VPS4B; the interaction is direct. Interacts with CHMP7. Interacts with CFTR; the interaction requires misfolded CFTR. Interacts with PTPN23. Interacts with CC2D1B. ISGylated. Isgylation weakens its interaction with VPS4A.

The protein localises to the cytoplasm. Its subcellular location is the cytosol. It is found in the late endosome membrane. The protein resides in the midbody. It localises to the nucleus envelope. Functionally, probable core component of the endosomal sorting required for transport complex III (ESCRT-III) which is involved in multivesicular bodies (MVBs) formation and sorting of endosomal cargo proteins into MVBs. MVBs contain intraluminal vesicles (ILVs) that are generated by invagination and scission from the limiting membrane of the endosome and mostly are delivered to lysosomes enabling degradation of membrane proteins, such as stimulated growth factor receptors, lysosomal enzymes and lipids. The MVB pathway appears to require the sequential function of ESCRT-O, -I,-II and -III complexes. ESCRT-III proteins mostly dissociate from the invaginating membrane before the ILV is released. The ESCRT machinery also functions in topologically equivalent membrane fission events, such as the terminal stages of cytokinesis. Together with SPAST, the ESCRT-III complex promotes nuclear envelope sealing and mitotic spindle disassembly during late anaphase. Plays a role in the endosomal sorting pathway. ESCRT-III proteins are believed to mediate the necessary vesicle extrusion and/or membrane fission activities, possibly in conjunction with the AAA ATPase VPS4. When overexpressed, membrane-assembled circular arrays of CHMP4B filaments can promote or stabilize negative curvature and outward budding. CHMP4A/B/C are required for the exosomal release of SDCBP, CD63 and syndecan. Majority of the protein exists in a folded closed conformation. This is Charged multivesicular body protein 4b (Chmp4b) from Mus musculus (Mouse).